We begin with the raw amino-acid sequence, 205 residues long: High frequency lysogenization protein HflD homolog (205 aa).

This sequence belongs to the HflD family.

The protein resides in the cytoplasm. Its subcellular location is the cell inner membrane. In Vibrio parahaemolyticus serotype O3:K6 (strain RIMD 2210633), this protein is High frequency lysogenization protein HflD homolog.